The following is a 134-amino-acid chain: Z-ring associated protein G (134 aa).

The chain crosses the membrane as a helical span at residues 7–27 (EIWVAIGIAFIVGLFIGYIIV). The disordered stretch occupies residues 107-134 (ATDKSQNEQPRDYSEGASGLFKENKEEN). Residues 111-120 (SQNEQPRDYS) show a composition bias toward basic and acidic residues.

Belongs to the ZapG family.

The protein localises to the cell inner membrane. Its function is as follows. Involved in cell division, cell envelope biogenesis and cell shape maintenance. This is Z-ring associated protein G from Haemophilus influenzae (strain ATCC 51907 / DSM 11121 / KW20 / Rd).